A 744-amino-acid polypeptide reads, in one-letter code: Phosphoribosylformylglycinamidine synthase subunit PurL (744 aa).

The active site involves histidine 49. Tyrosine 52 and lysine 91 together coordinate ATP. A Mg(2+)-binding site is contributed by glutamate 93. Substrate contacts are provided by residues 94 to 97 (SHNH) and arginine 116. Catalysis depends on histidine 95, which acts as the Proton acceptor. Aspartate 117 serves as a coordination point for Mg(2+). Residue glutamine 240 coordinates substrate. Mg(2+) is bound at residue aspartate 268. Residue 312–314 (ESQ) participates in substrate binding. 2 residues coordinate ATP: aspartate 493 and glycine 530. Asparagine 531 provides a ligand contact to Mg(2+). Substrate is bound at residue serine 533.

The protein belongs to the FGAMS family. As to quaternary structure, monomer. Part of the FGAM synthase complex composed of 1 PurL, 1 PurQ and 2 PurS subunits.

It is found in the cytoplasm. The enzyme catalyses N(2)-formyl-N(1)-(5-phospho-beta-D-ribosyl)glycinamide + L-glutamine + ATP + H2O = 2-formamido-N(1)-(5-O-phospho-beta-D-ribosyl)acetamidine + L-glutamate + ADP + phosphate + H(+). Its pathway is purine metabolism; IMP biosynthesis via de novo pathway; 5-amino-1-(5-phospho-D-ribosyl)imidazole from N(2)-formyl-N(1)-(5-phospho-D-ribosyl)glycinamide: step 1/2. In terms of biological role, part of the phosphoribosylformylglycinamidine synthase complex involved in the purines biosynthetic pathway. Catalyzes the ATP-dependent conversion of formylglycinamide ribonucleotide (FGAR) and glutamine to yield formylglycinamidine ribonucleotide (FGAM) and glutamate. The FGAM synthase complex is composed of three subunits. PurQ produces an ammonia molecule by converting glutamine to glutamate. PurL transfers the ammonia molecule to FGAR to form FGAM in an ATP-dependent manner. PurS interacts with PurQ and PurL and is thought to assist in the transfer of the ammonia molecule from PurQ to PurL. This is Phosphoribosylformylglycinamidine synthase subunit PurL from Nitrobacter hamburgensis (strain DSM 10229 / NCIMB 13809 / X14).